Here is a 297-residue protein sequence, read N- to C-terminus: Halorhodopsin (297 aa).

The tract at residues 1–31 is disordered; sequence MRSRTYHDQSVCGPYGSQRTDCDRDTDAGSD. The Extracellular segment spans residues 1–45; that stretch reads MRSRTYHDQSVCGPYGSQRTDCDRDTDAGSDTDVHGAQVATQIRT. Residues 46–71 form a helical membrane-spanning segment; it reads DTLLHSSLWVNIALAGLSILVFLYMA. Residues 72 to 77 lie on the Cytoplasmic side of the membrane; that stretch reads RTVRAN. The helical transmembrane segment at 78-101 threads the bilayer; the sequence is RARLIVGATLMIPLVSLSSYLGLV. Over 102 to 125 the chain is Extracellular; the sequence is TGLTAGPIEMPAAHALAGEDVLSQ. Residues 126–147 form a helical membrane-spanning segment; that stretch reads WGRYLTWTLSTPMILLALGWLA. At 148-150 the chain is on the cytoplasmic side; the sequence is EVD. The chain crosses the membrane as a helical span at residues 151–174; it reads TADLFVVIAADIGMCLTGLAAALT. Topologically, residues 175-177 are extracellular; that stretch reads TSS. Residues 178–200 form a helical membrane-spanning segment; that stretch reads YAFRWAFYLVSTAFFVVVLYALL. Residues 201-212 are Cytoplasmic-facing; the sequence is AKWPTNAEAAGT. Residues 213-236 form a helical membrane-spanning segment; sequence GDIFGTLRWLTVILWLGYPILWAL. Over 237-246 the chain is Extracellular; that stretch reads GVEGFALVDS. A helical transmembrane segment spans residues 247–275; the sequence is VGLTSWGYSLLDIGAKYLFAALLLRWVAN. Lys262 carries the post-translational modification N6-(retinylidene)lysine. Over 276–297 the chain is Cytoplasmic; that stretch reads NERTIAVGQRSGRGAIGDPVED.

It belongs to the archaeal/bacterial/fungal opsin family.

It localises to the cell membrane. Functionally, light-driven chloride pump. The sequence is that of Halorhodopsin (hop) from Haloterrigena sp. (strain arg-4).